Reading from the N-terminus, the 200-residue chain is Large ribosomal subunit protein uL4 (200 aa).

The tract at residues 43 to 71 is disordered; it reads RAQKTRAEVSGSGKKPWRQKGTGRARSGD.

It belongs to the universal ribosomal protein uL4 family. In terms of assembly, part of the 50S ribosomal subunit.

Functionally, one of the primary rRNA binding proteins, this protein initially binds near the 5'-end of the 23S rRNA. It is important during the early stages of 50S assembly. It makes multiple contacts with different domains of the 23S rRNA in the assembled 50S subunit and ribosome. In terms of biological role, forms part of the polypeptide exit tunnel. This chain is Large ribosomal subunit protein uL4, found in Histophilus somni (strain 129Pt) (Haemophilus somnus).